The primary structure comprises 271 residues: Protein MGF 360-15R (271 aa).

This sequence belongs to the asfivirus MGF 360 family.

Functionally, plays a role in virus cell tropism, and may be required for efficient virus replication in macrophages. The chain is Protein MGF 360-15R from African swine fever virus (isolate Tick/Malawi/Lil 20-1/1983) (ASFV).